We begin with the raw amino-acid sequence, 246 residues long: tRNA (guanine-N(1)-)-methyltransferase (246 aa).

Residues glycine 114 and 134–139 (IGDYIL) each bind S-adenosyl-L-methionine.

It belongs to the RNA methyltransferase TrmD family. As to quaternary structure, homodimer.

Its subcellular location is the cytoplasm. The catalysed reaction is guanosine(37) in tRNA + S-adenosyl-L-methionine = N(1)-methylguanosine(37) in tRNA + S-adenosyl-L-homocysteine + H(+). Functionally, specifically methylates guanosine-37 in various tRNAs. The chain is tRNA (guanine-N(1)-)-methyltransferase from Coxiella burnetii (strain CbuG_Q212) (Coxiella burnetii (strain Q212)).